Here is a 107-residue protein sequence, read N- to C-terminus: Transcription initiation factor IIA subunit 2-2 (107 aa).

Belongs to the TFIIA subunit 2 family. As to quaternary structure, TFIIA is a heterodimer of the large unprocessed subunit 1 and a small subunit gamma. It was originally believed to be a heterotrimer of an alpha (p30), a beta (p20) and a gamma (p14) subunit.

It localises to the nucleus. Functionally, TFIIA is a component of the transcription machinery of RNA polymerase II and plays an important role in transcriptional activation. TFIIA in a complex with TBP mediates transcriptional activity. The chain is Transcription initiation factor IIA subunit 2-2 (TfIIA-S-2) from Drosophila melanogaster (Fruit fly).